The following is a 60-amino-acid chain: MRAKSAIFSRTSLSLCSARLLASSQWVPSSSRNSSAISSRLNPSRCADFTNFTRTTSASP.

The sequence is that of Putative mercuric resistance protein from Shigella flexneri.